Here is a 156-residue protein sequence, read N- to C-terminus: Small ribosomal subunit protein uS7 (156 aa).

The protein belongs to the universal ribosomal protein uS7 family. As to quaternary structure, part of the 30S ribosomal subunit. Contacts proteins S9 and S11.

Its function is as follows. One of the primary rRNA binding proteins, it binds directly to 16S rRNA where it nucleates assembly of the head domain of the 30S subunit. Is located at the subunit interface close to the decoding center, probably blocks exit of the E-site tRNA. In Janthinobacterium sp. (strain Marseille) (Minibacterium massiliensis), this protein is Small ribosomal subunit protein uS7.